Consider the following 321-residue polypeptide: Polygalacturonan/rhamnogalacturonan transport system permease protein YteP (321 aa).

The 144-residue stretch at Met1 to Ile144 folds into the ABC transmembrane type-1 domain. A run of 3 helical transmembrane segments spans residues Arg21–Gly41, Tyr63–Leu83, and Ile123–Val143.

Belongs to the binding-protein-dependent transport system permease family. The complex is probably composed of two ATP-binding proteins (MsmX), two transmembrane proteins (YtcP and YteP) and a solute-binding protein (YtcQ).

It localises to the cell membrane. Functionally, involved in pectin degradation. Part of the ABC transporter complex YtcQP-YteP involved in the uptake of polygalacturonan and rhamnogalacturonan type I. Responsible for the translocation of the substrate across the membrane. This is Polygalacturonan/rhamnogalacturonan transport system permease protein YteP (yteP) from Bacillus subtilis (strain 168).